Here is a 593-residue protein sequence, read N- to C-terminus: Corrinoid activation enzyme RamQ (593 aa).

The 2Fe-2S ferredoxin-type domain maps to 1–76 (MRVLFPLLEE…GMEIYASREQ (76 aa)). Residues Cys35, Cys41, Cys44, and Cys60 each coordinate [2Fe-2S] cluster.

Requires [2Fe-2S] cluster as cofactor.

In terms of biological role, involved in the degradation of the quaternary amines L-proline betaine and L-carnitine. Component of a corrinoid-dependent methyltransferase system that transfers a methyl group from L-proline betaine or L-carnitine to tetrahydrofolate (THF), forming methyl-THF, a key intermediate in the Wood-Ljungdahl acetogenesis pathway. RamQ is not required for the methyl transfer, but it stimulates reduction of reconstituted MtqC from the Co(II) state to the Co(I) state in vitro. It also stimulates the rate of THF methylation. This is Corrinoid activation enzyme RamQ from Eubacterium limosum.